The chain runs to 455 residues: UDP-N-acetylmuramoylalanine--D-glutamate ligase (455 aa).

Position 119-125 (119-125 (GTNGKTT)) interacts with ATP.

The protein belongs to the MurCDEF family.

Its subcellular location is the cytoplasm. It carries out the reaction UDP-N-acetyl-alpha-D-muramoyl-L-alanine + D-glutamate + ATP = UDP-N-acetyl-alpha-D-muramoyl-L-alanyl-D-glutamate + ADP + phosphate + H(+). Its pathway is cell wall biogenesis; peptidoglycan biosynthesis. Its function is as follows. Cell wall formation. Catalyzes the addition of glutamate to the nucleotide precursor UDP-N-acetylmuramoyl-L-alanine (UMA). This Listeria innocua serovar 6a (strain ATCC BAA-680 / CLIP 11262) protein is UDP-N-acetylmuramoylalanine--D-glutamate ligase.